The chain runs to 360 residues: Phosphate acyltransferase (360 aa).

The span at 296 to 305 shows a compositional bias: basic and acidic residues; that stretch reads STLRREHLDR. The segment at 296–360 is disordered; sequence STLRREHLDR…LRTAEPPGSL (65 aa). Residues 314 to 333 show a composition bias toward basic residues; the sequence is PRQRRRPRRQKRRAACRPRP. A compositionally biased stretch (low complexity) spans 334–350; sequence RSAAGRAPGSGVRGAAG.

This sequence belongs to the PlsX family. Homodimer. Probably interacts with PlsY.

It localises to the cytoplasm. The catalysed reaction is a fatty acyl-[ACP] + phosphate = an acyl phosphate + holo-[ACP]. The protein operates within lipid metabolism; phospholipid metabolism. Catalyzes the reversible formation of acyl-phosphate (acyl-PO(4)) from acyl-[acyl-carrier-protein] (acyl-ACP). This enzyme utilizes acyl-ACP as fatty acyl donor, but not acyl-CoA. The protein is Phosphate acyltransferase of Deinococcus radiodurans (strain ATCC 13939 / DSM 20539 / JCM 16871 / CCUG 27074 / LMG 4051 / NBRC 15346 / NCIMB 9279 / VKM B-1422 / R1).